The following is a 508-amino-acid chain: MRLNPEEVSWVIQQEIEKYHEDLSLKFESAGRVLYVGDGIARVWGLDDVMMSELVEFPDGTLGIVLNLEIDNVGVIILGSDRNIREQDIVKRTGKIASVPVGEGMLGRVINALGQPIDGKGAIETKEFRAIESSAPGVVQRKPVNEPVQTGIKAIDSMIPIGRGQRELIIGDRQTGKTTVILDTIINQKNTGVCCIYVAIGQKSSTIAQVVKILEEHDAMKYTIIVAATASDPAALQYVAPYSATALGEHFMYNGKHVICFYDDLSKHAQAYREIALLLRRPPGREAYPGDIFYLHSRLLERSAKLSTELGGGSLTAVPVIETQANDVTTYIPTNVISITDGQIYLESDLFYAGVRPAINVGISASRVGGKAQSKAMKKVAASLRLDLAQYRELAAFAQFGSEMDKTTQAQLVRGERMIEVLKQDKFKPISLSKQVMIIFTGTKGFLDDLPLPFIKNFENEFYLFMDENHPHISNSIEQSLDLDQKTMEQLNEAVTKFKSDFKLRYQI.

171 to 178 (GDRQTGKT) lines the ATP pocket.

It belongs to the ATPase alpha/beta chains family. F-type ATPases have 2 components, CF(1) - the catalytic core - and CF(0) - the membrane proton channel. CF(1) has five subunits: alpha(3), beta(3), gamma(1), delta(1), epsilon(1). CF(0) has three main subunits: a(1), b(2) and c(9-12). The alpha and beta chains form an alternating ring which encloses part of the gamma chain. CF(1) is attached to CF(0) by a central stalk formed by the gamma and epsilon chains, while a peripheral stalk is formed by the delta and b chains.

Its subcellular location is the cell membrane. The enzyme catalyses ATP + H2O + 4 H(+)(in) = ADP + phosphate + 5 H(+)(out). In terms of biological role, produces ATP from ADP in the presence of a proton gradient across the membrane. The alpha chain is a regulatory subunit. This chain is ATP synthase subunit alpha, found in Protochlamydia amoebophila (strain UWE25).